We begin with the raw amino-acid sequence, 2067 residues long: Dedicator of cytokinesis protein 11 (2067 aa).

Positions 162–269 (GVMKQGWLQK…WVNTIKQALL (108 aa)) constitute a PH domain. The tract at residues 274-302 (DRRNGSETSEGSLDDDSSSQGKPESITES) is disordered. Over residues 291-302 (SSQGKPESITES) the composition is skewed to polar residues. The C2 DOCK-type domain maps to 643 to 820 (NNHLYIYPQQ…PLFKVRAYVA (178 aa)). The tract at residues 1224–1267 (SSTIVDKEPSGSVTQNGLSRRGESRGSMYGDPGTPDINELHRRG) is disordered. One can recognise a DOCKER domain in the interval 1614 to 2040 (RSYASTPELR…LSEIIHEQIF (427 aa)).

Belongs to the DOCK family.

In terms of biological role, guanine nucleotide-exchange factor (GEF) that activates CDC42 by exchanging bound GDP for free GTP. The chain is Dedicator of cytokinesis protein 11 from Danio rerio (Zebrafish).